Here is a 199-residue protein sequence, read N- to C-terminus: N-(5'-phosphoribosyl)anthranilate isomerase (199 aa).

The protein belongs to the TrpF family.

It carries out the reaction N-(5-phospho-beta-D-ribosyl)anthranilate = 1-(2-carboxyphenylamino)-1-deoxy-D-ribulose 5-phosphate. It participates in amino-acid biosynthesis; L-tryptophan biosynthesis; L-tryptophan from chorismate: step 3/5. This chain is N-(5'-phosphoribosyl)anthranilate isomerase, found in Campylobacter jejuni subsp. jejuni serotype O:2 (strain ATCC 700819 / NCTC 11168).